A 298-amino-acid chain; its full sequence is N-acetylmuramic acid 6-phosphate etherase (298 aa).

An SIS domain is found at 55–218 (AANRYKKGGR…STGVMIRQGK (164 aa)). Glu83 serves as the catalytic Proton donor. Residue Glu114 is part of the active site.

The protein belongs to the GCKR-like family. MurNAc-6-P etherase subfamily. As to quaternary structure, homodimer.

It catalyses the reaction N-acetyl-D-muramate 6-phosphate + H2O = N-acetyl-D-glucosamine 6-phosphate + (R)-lactate. It participates in amino-sugar metabolism; N-acetylmuramate degradation. Specifically catalyzes the cleavage of the D-lactyl ether substituent of MurNAc 6-phosphate, producing GlcNAc 6-phosphate and D-lactate. This chain is N-acetylmuramic acid 6-phosphate etherase, found in Lactobacillus acidophilus (strain ATCC 700396 / NCK56 / N2 / NCFM).